A 70-amino-acid polypeptide reads, in one-letter code: Large ribosomal subunit protein bL31 (70 aa).

Zn(2+) contacts are provided by Cys-16, Cys-18, Cys-37, and Cys-40.

It belongs to the bacterial ribosomal protein bL31 family. Type A subfamily. Part of the 50S ribosomal subunit. Zn(2+) serves as cofactor.

Functionally, binds the 23S rRNA. The protein is Large ribosomal subunit protein bL31 of Haemophilus influenzae (strain PittEE).